The following is a 472-amino-acid chain: Argininosuccinate lyase (472 aa).

This sequence belongs to the lyase 1 family. Argininosuccinate lyase subfamily.

It is found in the cytoplasm. It catalyses the reaction 2-(N(omega)-L-arginino)succinate = fumarate + L-arginine. The protein operates within amino-acid biosynthesis; L-arginine biosynthesis; L-arginine from L-ornithine and carbamoyl phosphate: step 3/3. The sequence is that of Argininosuccinate lyase from Mycobacterium avium (strain 104).